We begin with the raw amino-acid sequence, 103 residues long: MLIIKAILRTEIKKSITRKIRKNGGCPAVIYNKNKSPNINVQLSNKDLSHPENVHYFLKNNKVQILINNEFTITAKIQDVQYHPYKSNIIHIDFIHITTQSRS.

Belongs to the bacterial ribosomal protein bL25 family. Part of the 50S ribosomal subunit; part of the 5S rRNA/L5/L18/L25 subcomplex. Contacts the 5S rRNA. Binds to the 5S rRNA independently of L5 and L18.

This is one of the proteins that binds to the 5S RNA in the ribosome where it forms part of the central protuberance. In Blochmanniella floridana, this protein is Large ribosomal subunit protein bL25.